The chain runs to 282 residues: sn-glycerol-3-phosphate transport system permease protein UgpE (282 aa).

6 helical membrane passes run 14–34, 86–106, 112–132, 136–156, 201–221, and 248–268; these read LMLIIGIIIVVFPIYYTFVAS, IAIAVGKIVISFLSAFAIVFF, MAFFWMIFITLMLPVEVRILP, VIVDLGLIDTYAGLTLPLMAS, IAALFVILFIYGWTQYLWPLL, and WNYVMVTAILAIIPPVAVVVL. The ABC transmembrane type-1 domain maps to 78–269; it reads LFNTFVVAIA…IPPVAVVVLM (192 aa).

The protein belongs to the binding-protein-dependent transport system permease family. As to quaternary structure, the complex is composed of two ATP-binding proteins (UgpC), two transmembrane proteins (UgpA and UgpE) and a solute-binding protein (UgpB).

It localises to the cell inner membrane. Part of the ABC transporter complex UgpBAEC involved in sn-glycerol-3-phosphate (G3P) import. Probably responsible for the translocation of the substrate across the membrane. This Rhizobium meliloti (strain 1021) (Ensifer meliloti) protein is sn-glycerol-3-phosphate transport system permease protein UgpE (ugpE).